The following is a 112-amino-acid chain: Large ribosomal subunit protein uL22 (112 aa).

It belongs to the universal ribosomal protein uL22 family. Part of the 50S ribosomal subunit.

This protein binds specifically to 23S rRNA; its binding is stimulated by other ribosomal proteins, e.g. L4, L17, and L20. It is important during the early stages of 50S assembly. It makes multiple contacts with different domains of the 23S rRNA in the assembled 50S subunit and ribosome. Its function is as follows. The globular domain of the protein is located near the polypeptide exit tunnel on the outside of the subunit, while an extended beta-hairpin is found that lines the wall of the exit tunnel in the center of the 70S ribosome. This chain is Large ribosomal subunit protein uL22, found in Mesoplasma florum (strain ATCC 33453 / NBRC 100688 / NCTC 11704 / L1) (Acholeplasma florum).